The chain runs to 363 residues: MTLTRLLIRDFRNIAAADLPLATGFNFLVGSNGSGKTSVLEAIYTLGHGRSFRSIQAGRVILHGCDEFVLHGRLGQQENERERSIGLSKNRNGDSKVRIDGSDGGKIAELAKMLPMQLITPEGFTLLNGGPKYRRAFIDWGCFHNEPRFFSAWVNLKRLLKQRNAALRQVTRYSQIRPWDQELIPLANQINQWRGEYVTNITQDITNTCKQFLPEFTLSFSFQQGWDKESDYAELLERQFERDRTLTYTASGPHKADLRIRAEGTPVEDMLSRGQLKLLMCALRLAQGEYFTRQSGQQCLYLLDDFASELDTSRRQLLAARLKSTQAQVFVSAINPDQITDMLDGNSKMFRVENGKIEVQPQD.

An ATP-binding site is contributed by 30 to 37 (GSNGSGKT).

Belongs to the RecF family.

The protein localises to the cytoplasm. In terms of biological role, the RecF protein is involved in DNA metabolism; it is required for DNA replication and normal SOS inducibility. RecF binds preferentially to single-stranded, linear DNA. It also seems to bind ATP. The chain is DNA replication and repair protein RecF from Photorhabdus laumondii subsp. laumondii (strain DSM 15139 / CIP 105565 / TT01) (Photorhabdus luminescens subsp. laumondii).